Reading from the N-terminus, the 306-residue chain is uncharacterized protein (306 aa).

Transmembrane regions (helical) follow at residues V6–I26, H37–T57, I67–I87, T91–L111, W125–F145, S148–F168, G177–L197, L213–V233, and A251–L271. EamA domains are found at residues G17 to F140 and F160 to L285.

It belongs to the EamA transporter family.

Its subcellular location is the cell membrane. This is an uncharacterized protein from Bacillus subtilis (strain 168).